The following is a 531-amino-acid chain: Methyl-accepting chemotaxis protein McpN (531 aa).

Over 1 to 24 (MNESVARVFDRILRGLGLKTLNAQ) the chain is Cytoplasmic. A helical transmembrane segment spans residues 25 to 45 (FLLSYALMFGLAACASVALYL). The Periplasmic portion of the chain corresponds to 46-174 (SMSISPETIN…LMSARADSVQ (129 aa)). Residues 52-140 (ETINVAGAQR…AMLDQVAQPA (89 aa)) form a pilJ-type region. The N-box signature appears at 54–65 (INVAGAQRMLSQ). Arg-61 is a binding site for nitrate. A helical membrane pass occupies residues 175-195 (HTQMWIAFGCLLAILVLVVLG). Over 196-531 (RQFGLAPLMR…LRVVLGRFRT (336 aa)) the chain is Cytoplasmic. Residues 201-254 (APLMRQLRGLEVALTEVGAANFTHALAAGHADNEIGRIVAGYERMRQDVSGLLA) form the HAMP domain. Residues 259-495 (SAAETDKDVA…DIDRNITNVS (237 aa)) enclose the Methyl-accepting transducer domain.

It belongs to the methyl-accepting chemotaxis (MCP) protein family. Ligand free ligand-binding domain (LBD) is present in a monomer-dimer equilibrium. Nitrate binding to the periplasmic LBD stabilizes the homodimer.

The protein resides in the cell inner membrane. Functionally, chemotactic-signal transducers respond to changes in the concentration of attractants and repellents in the environment, transduce a signal from the outside to the inside of the cell, and facilitate sensory adaptation through the variation of the level of methylation. McpN is a chemoreceptor that recognizes specifically nitrate and mediates chemoattraction. Binds nitrate specifically and shows no affinity for other ligands such as nitrite. McpN-mediated taxis occurs only under nitrate starvation conditions. In Pseudomonas aeruginosa (strain ATCC 15692 / DSM 22644 / CIP 104116 / JCM 14847 / LMG 12228 / 1C / PRS 101 / PAO1), this protein is Methyl-accepting chemotaxis protein McpN.